Consider the following 121-residue polypeptide: Phosphoribosyl-ATP pyrophosphatase (121 aa).

It belongs to the PRA-PH family.

It localises to the cytoplasm. It carries out the reaction 1-(5-phospho-beta-D-ribosyl)-ATP + H2O = 1-(5-phospho-beta-D-ribosyl)-5'-AMP + diphosphate + H(+). Its pathway is amino-acid biosynthesis; L-histidine biosynthesis; L-histidine from 5-phospho-alpha-D-ribose 1-diphosphate: step 2/9. This is Phosphoribosyl-ATP pyrophosphatase from Burkholderia cenocepacia (strain ATCC BAA-245 / DSM 16553 / LMG 16656 / NCTC 13227 / J2315 / CF5610) (Burkholderia cepacia (strain J2315)).